The sequence spans 101 residues: DNA-binding protein Fis (101 aa).

Residues 77–96 (QTRAANMLGINRGTLRKKLK) constitute a DNA-binding region (H-T-H motif).

It belongs to the transcriptional regulatory Fis family. Homodimer.

Activates ribosomal RNA transcription. Plays a direct role in upstream activation of rRNA promoters. The chain is DNA-binding protein Fis from Shewanella amazonensis (strain ATCC BAA-1098 / SB2B).